The sequence spans 41 residues: Photosystem I reaction center subunit IX (41 aa).

The chain crosses the membrane as a helical span at residues 7 to 27 (YLSVAPVLSTLWFGALAGLLI).

The protein belongs to the PsaJ family.

It is found in the plastid. It localises to the chloroplast thylakoid membrane. In terms of biological role, may help in the organization of the PsaE and PsaF subunits. This chain is Photosystem I reaction center subunit IX, found in Jasminum nudiflorum (Winter jasmine).